A 505-amino-acid chain; its full sequence is RNA-splicing ligase RtcB homolog (505 aa).

Positions 119, 122, 227, and 259 each coordinate Mn(2+). Asn226–Glu230 lines the GMP pocket. Phosphoserine is present on Ser300. Residue His353 participates in Mn(2+) binding. GMP contacts are provided by residues His353–Asn354, Gly402–Met405, Ser409, and His428–Gly431. The active-site GMP-histidine intermediate is His428. Lys496 is covalently cross-linked (Glycyl lysine isopeptide (Lys-Gly) (interchain with G-Cter in SUMO2)). Lys504 is a binding site for GMP.

Belongs to the RtcB family. In terms of assembly, catalytic component of the tRNA-splicing ligase complex. It depends on Mn(2+) as a cofactor.

It localises to the nucleus. The protein localises to the cytoplasm. It catalyses the reaction a 3'-end 3'-phospho-ribonucleotide-RNA + a 5'-end dephospho-ribonucleoside-RNA + GTP = a ribonucleotidyl-ribonucleotide-RNA + GMP + diphosphate. The catalysed reaction is a 3'-end 2',3'-cyclophospho-ribonucleotide-RNA + a 5'-end dephospho-ribonucleoside-RNA + GTP + H2O = a ribonucleotidyl-ribonucleotide-RNA + GMP + diphosphate + H(+). In terms of biological role, catalytic subunit of the tRNA-splicing ligase complex that acts by directly joining spliced tRNA halves to mature-sized tRNAs by incorporating the precursor-derived splice junction phosphate into the mature tRNA as a canonical 3',5'-phosphodiester. May act as an RNA ligase with broad substrate specificity, and may function toward other RNAs. The protein is RNA-splicing ligase RtcB homolog of Sus scrofa (Pig).